A 165-amino-acid chain; its full sequence is Large ribosomal subunit protein uL10 (165 aa).

It belongs to the universal ribosomal protein uL10 family. In terms of assembly, part of the ribosomal stalk of the 50S ribosomal subunit. The N-terminus interacts with L11 and the large rRNA to form the base of the stalk. The C-terminus forms an elongated spine to which L12 dimers bind in a sequential fashion forming a multimeric L10(L12)X complex.

In terms of biological role, forms part of the ribosomal stalk, playing a central role in the interaction of the ribosome with GTP-bound translation factors. The chain is Large ribosomal subunit protein uL10 from Pectobacterium carotovorum subsp. carotovorum (strain PC1).